Here is a 274-residue protein sequence, read N- to C-terminus: Serine/threonine-protein kinase 1 (274 aa).

The Protein kinase domain occupies 17–265; it reads ARTALHLVNG…YEVIQKNTYW (249 aa). Residues 23–31 and K46 each bind ATP; that span reads LVNGKFGKV. D133 serves as the catalytic Proton acceptor.

The protein belongs to the protein kinase superfamily. Ser/Thr protein kinase family.

It carries out the reaction L-seryl-[protein] + ATP = O-phospho-L-seryl-[protein] + ADP + H(+). The catalysed reaction is L-threonyl-[protein] + ATP = O-phospho-L-threonyl-[protein] + ADP + H(+). In vitro, can phosphorylate histone H1. In Lymantria dispar multicapsid nuclear polyhedrosis virus (LdMNPV), this protein is Serine/threonine-protein kinase 1 (PK1).